A 63-amino-acid chain; its full sequence is UPF0337 protein SERP0494 (63 aa).

Positions Met1–Val46 are disordered. The segment covering Asp22 to Val46 has biased composition (basic and acidic residues).

Belongs to the UPF0337 (CsbD) family.

The polypeptide is UPF0337 protein SERP0494 (Staphylococcus epidermidis (strain ATCC 35984 / DSM 28319 / BCRC 17069 / CCUG 31568 / BM 3577 / RP62A)).